We begin with the raw amino-acid sequence, 145 residues long: Putative pre-16S rRNA nuclease (145 aa).

This sequence belongs to the YqgF nuclease family.

The protein resides in the cytoplasm. In terms of biological role, could be a nuclease involved in processing of the 5'-end of pre-16S rRNA. This chain is Putative pre-16S rRNA nuclease, found in Thiobacillus denitrificans (strain ATCC 25259 / T1).